Here is a 227-residue protein sequence, read N- to C-terminus: PKHD-type hydroxylase Caul_0045 (227 aa).

The region spanning 78–178 (TILSPLFNRY…RTASFFWIQS (101 aa)) is the Fe2OG dioxygenase domain. Residues H96, D98, and H159 each contribute to the Fe cation site. R169 contributes to the 2-oxoglutarate binding site.

The cofactor is Fe(2+). L-ascorbate is required as a cofactor.

The polypeptide is PKHD-type hydroxylase Caul_0045 (Caulobacter sp. (strain K31)).